Reading from the N-terminus, the 1309-residue chain is Angiotensin-converting enzyme (1309 aa).

A signal peptide spans 1 to 33 (MGAASGCRWPWPPLLPLLLMLLLPPPPLPVALA). Topologically, residues 34 to 1259 (LDSALQPGNF…GLNLEEQQAR (1226 aa)) are extracellular. Asn42, Asn58, Asn78, Asn115, Asn135, Asn150, and Asn164 each carry an N-linked (GlcNAc...) asparagine glycan. Peptidase M2 domains lie at 44–627 (TADE…LGWP) and 646–1225 (VSDE…LGWP). Cys161 and Cys169 are oxidised to a cystine. Tyr235 contributes to the chloride binding site. An N-linked (GlcNAc...) asparagine glycan is attached at Asn322. A disulfide bridge connects residues Cys363 and Cys381. A Zn(2+)-binding site is contributed by His394. The active-site Proton acceptor 1 is the Glu395. The Zn(2+) site is built by His398 and Glu422. The N-linked (GlcNAc...) asparagine glycan is linked to Asn512. His523 acts as the Proton donor 1 in catalysis. An N-linked (GlcNAc...) asparagine glycan is attached at Asn526. Arg532 is a binding site for chloride. A disulfide bridge connects residues Cys548 and Cys560. Asn680, Asn698, Asn717, and Asn763 each carry an N-linked (GlcNAc...) asparagine glycan. Cys760 and Cys766 form a disulfide bridge. Residues Arg794 and Tyr832 each contribute to the chloride site. The N-linked (GlcNAc...) asparagine glycan is linked to Asn945. An intrachain disulfide couples Cys960 to Cys978. His991 provides a ligand contact to Zn(2+). Glu992 serves as the catalytic Proton acceptor 2. 2 residues coordinate Zn(2+): His995 and Glu1019. Chloride is bound by residues Trp1093 and Arg1097. His1121 (proton donor 2) is an active-site residue. Arg1130 lines the chloride pocket. A disulfide bridge links Cys1146 with Cys1158. Asn1194 and Asn1228 each carry an N-linked (GlcNAc...) asparagine glycan. The segment at 1218 to 1259 (HGEKLGWPQYNWTPNSARLEGSFAGTGRVNFLGLNLEEQQAR) is juxtamembrane stalk. A helical membrane pass occupies residues 1260 to 1280 (VGQWVLLFLGVTLLVATMGLT). Topologically, residues 1281-1309 (QRLFSIRHQILRRTHRGPQFGSEVELRHS) are cytoplasmic. Ser1302 bears the Phosphoserine mark.

It belongs to the peptidase M2 family. Monomer and homodimer; homodimerizes following binding to an inhibitor. Interacts with calmodulin (CALM1, CALM2 or CALM3); interaction takes place in the cytoplasmic region and regulates phosphorylation and proteolytic cleavage. The cofactor is Zn(2+). Chloride is required as a cofactor. Produced following proteolytic cleavage by secretase enzymes that cleave the transmembrane form in the juxtamembrane stalk region upstream of the transmembrane region. Cleavage can take place at different sites of the juxtamembrane stalk region. In terms of processing, phosphorylated by CK2 on Ser-1302; which allows membrane retention. Phosphorylated on tyrosine residues on its extracellular part, promoting cleavage by secretase enzymes and formation of the soluble form (Angiotensin-converting enzyme, soluble form).

Its subcellular location is the cell membrane. The protein resides in the cytoplasm. The protein localises to the secreted. The enzyme catalyses Release of a C-terminal dipeptide, oligopeptide-|-Xaa-Yaa, when Xaa is not Pro, and Yaa is neither Asp nor Glu. Thus, conversion of angiotensin I to angiotensin II, with increase in vasoconstrictor activity, but no action on angiotensin II.. The catalysed reaction is angiotensin I + H2O = L-histidyl-L-leucine + angiotensin II. It carries out the reaction bradykinin + H2O = L-Phe-L-Arg + bradykinin(1-7). It catalyses the reaction substance P + H2O = substance P(1-9) + L-Leu-L-Met-NH2. The enzyme catalyses substance P + H2O = substance P(1-8) + Gly-L-Leu-L-Met-NH2. The catalysed reaction is substance P + H2O = L-Phe-L-Phe-Gly-L-Leu-L-Met-NH2 + substance P(1-6). It carries out the reaction neurotensin + H2O = neurotensin(1-11) + L-isoleucyl-L-leucine. It catalyses the reaction goralatide + H2O = N-acetyl-L-seryl-L-aspartate + L-lysyl-L-proline. The enzyme catalyses Met-enkephalin + H2O = L-phenylalanyl-L-methionine + L-tyrosylglycylglycine. The catalysed reaction is Leu-enkephalin + H2O = L-tyrosylglycylglycine + L-phenylalanyl-L-leucine. It carries out the reaction Met-enkephalin-Arg-Phe + H2O = L-arginyl-L-phenylalanine + Met-enkephalin. The dipeptidyl carboxypeptidase activity is strongly activated by chloride. The dipeptidyl carboxypeptidase activity is specifically inhibited by lisinopril, captopril and enalaprilat. In terms of biological role, dipeptidyl carboxypeptidase that removes dipeptides from the C-terminus of a variety of circulating hormones, such as angiotensin I, bradykinin or enkephalins, thereby playing a key role in the regulation of blood pressure, electrolyte homeostasis or synaptic plasticity. Composed of two similar catalytic domains, each possessing a functional active site, with different selectivity for substrates. Plays a major role in the angiotensin-renin system that regulates blood pressure and sodium retention by the kidney by converting angiotensin I to angiotensin II, resulting in an increase of the vasoconstrictor activity of angiotensin. Also able to inactivate bradykinin, a potent vasodilator, and therefore enhance the blood pressure response. Acts as a regulator of synaptic transmission by mediating cleavage of neuropeptide hormones, such as substance P, neurotensin or enkephalins. Catalyzes degradation of different enkephalin neuropeptides (Met-enkephalin, Leu-enkephalin, Met-enkephalin-Arg-Phe and possibly Met-enkephalin-Arg-Gly-Leu). Acts as a regulator of synaptic plasticity in the nucleus accumbens of the brain by mediating cleavage of Met-enkephalin-Arg-Phe, a strong ligand of Mu-type opioid receptor OPRM1, into Met-enkephalin. Met-enkephalin-Arg-Phe cleavage by ACE decreases activation of OPRM1, leading to long-term synaptic potentiation of glutamate release. Also acts as a regulator of hematopoietic stem cell differentiation by mediating degradation of hemoregulatory peptide N-acetyl-SDKP (AcSDKP). Acts as a regulator of cannabinoid signaling pathway by mediating degradation of hemopressin, an antagonist peptide of the cannabinoid receptor CNR1. Involved in amyloid-beta metabolism by catalyzing degradation of Amyloid-beta protein 40 and Amyloid-beta protein 42 peptides, thereby preventing plaque formation. Catalyzes cleavage of cholecystokinin (maturation of Cholecystokinin-8 and Cholecystokinin-5) and Gonadoliberin-1 (both maturation and degradation) hormones. Degradation of hemoregulatory peptide N-acetyl-SDKP (AcSDKP) and amyloid-beta proteins is mediated by the N-terminal catalytic domain, while angiotensin I and cholecystokinin cleavage is mediated by the C-terminal catalytic region. Functionally, soluble form that is released in blood plasma and other body fluids following proteolytic cleavage in the juxtamembrane stalk region. The sequence is that of Angiotensin-converting enzyme from Sus scrofa (Pig).